A 244-amino-acid polypeptide reads, in one-letter code: NAD(P)H-quinone oxidoreductase subunit K (244 aa).

Residues cysteine 60, cysteine 61, cysteine 125, and cysteine 156 each coordinate [4Fe-4S] cluster. The span at 221–236 (SKKEKITELPENREQT) shows a compositional bias: basic and acidic residues. Residues 221-244 (SKKEKITELPENREQTEIINSEEE) form a disordered region.

The protein belongs to the complex I 20 kDa subunit family. As to quaternary structure, NDH-1 can be composed of about 15 different subunits; different subcomplexes with different compositions have been identified which probably have different functions. [4Fe-4S] cluster serves as cofactor.

The protein resides in the cellular thylakoid membrane. The catalysed reaction is a plastoquinone + NADH + (n+1) H(+)(in) = a plastoquinol + NAD(+) + n H(+)(out). It catalyses the reaction a plastoquinone + NADPH + (n+1) H(+)(in) = a plastoquinol + NADP(+) + n H(+)(out). NDH-1 shuttles electrons from an unknown electron donor, via FMN and iron-sulfur (Fe-S) centers, to quinones in the respiratory and/or the photosynthetic chain. The immediate electron acceptor for the enzyme in this species is believed to be plastoquinone. Couples the redox reaction to proton translocation, and thus conserves the redox energy in a proton gradient. Cyanobacterial NDH-1 also plays a role in inorganic carbon-concentration. The protein is NAD(P)H-quinone oxidoreductase subunit K of Prochlorococcus marinus (strain MIT 9312).